The sequence spans 124 residues: Heat-labile enterotoxin B chain (124 aa).

The first 21 residues, 1–21, serve as a signal peptide directing secretion; sequence MNKVKFYVLFTALLSSLCAHG. Cys-30 and Cys-107 are oxidised to a cystine.

In terms of assembly, heterohexamer of one A chain and of five B chains.

In terms of biological role, the biological activity of the toxin is produced by the A chain, which activates intracellular adenyl cyclase. In Escherichia coli, this protein is Heat-labile enterotoxin B chain (eltB).